A 222-amino-acid chain; its full sequence is Probable nicotinate-nucleotide adenylyltransferase (222 aa).

It belongs to the NadD family.

It carries out the reaction nicotinate beta-D-ribonucleotide + ATP + H(+) = deamido-NAD(+) + diphosphate. It functions in the pathway cofactor biosynthesis; NAD(+) biosynthesis; deamido-NAD(+) from nicotinate D-ribonucleotide: step 1/1. Catalyzes the reversible adenylation of nicotinate mononucleotide (NaMN) to nicotinic acid adenine dinucleotide (NaAD). The polypeptide is Probable nicotinate-nucleotide adenylyltransferase (Xylella fastidiosa (strain M23)).